A 1030-amino-acid chain; its full sequence is Probable serine/threonine-protein kinase SIS8 (1030 aa).

Composition is skewed to polar residues over residues Pro44 to Lys58 and Tyr399 to Glu419. Disordered stretches follow at residues Pro44–Lys84, Tyr399–Phe474, Thr555–Thr625, and Leu689–Asp736. Basic and acidic residues-rich tracts occupy residues Thr426–Ser435, Ile458–Lys471, and Asn560–His580. Residues Ser613–Thr625 show a composition bias toward low complexity. The Protein kinase domain occupies Ile748 to Leu1003. Residues Ile754–Val762 and Lys775 each bind ATP. Asp871 serves as the catalytic Proton acceptor. Residues Val1007–Pro1023 are compositionally biased toward polar residues. The interval Val1007–Asp1030 is disordered.

The protein belongs to the protein kinase superfamily. Ser/Thr protein kinase family. In terms of assembly, interacts with UGT72E1. In terms of tissue distribution, expressed roots, rosette and cauline leaves, and at lower levels in flowers and siliques.

Its subcellular location is the nucleus. It catalyses the reaction L-seryl-[protein] + ATP = O-phospho-L-seryl-[protein] + ADP + H(+). It carries out the reaction L-threonyl-[protein] + ATP = O-phospho-L-threonyl-[protein] + ADP + H(+). Acts as a negative regulator of salt tolerance. Mediates sugar response during early seedling development. The sequence is that of Probable serine/threonine-protein kinase SIS8 from Arabidopsis thaliana (Mouse-ear cress).